A 125-amino-acid chain; its full sequence is Neuraminyllactose-binding hemagglutinin (125 aa).

The tract at residues 92 to 97 (KRTIQK) is N-acetyl-neuraminyl-alpha(2,3)-lactose binding motif.

Its subcellular location is the cell outer membrane. The sequence is that of Neuraminyllactose-binding hemagglutinin (hpaA) from Helicobacter pylori (Campylobacter pylori).